Consider the following 298-residue polypeptide: 4-diphosphocytidyl-2-C-methyl-D-erythritol kinase (298 aa).

Lys19 is a catalytic residue. An ATP-binding site is contributed by 106-116 (PVASGIGGGSA). The active site involves Asp148.

Belongs to the GHMP kinase family. IspE subfamily.

It catalyses the reaction 4-CDP-2-C-methyl-D-erythritol + ATP = 4-CDP-2-C-methyl-D-erythritol 2-phosphate + ADP + H(+). The protein operates within isoprenoid biosynthesis; isopentenyl diphosphate biosynthesis via DXP pathway; isopentenyl diphosphate from 1-deoxy-D-xylulose 5-phosphate: step 3/6. Its function is as follows. Catalyzes the phosphorylation of the position 2 hydroxy group of 4-diphosphocytidyl-2C-methyl-D-erythritol. This chain is 4-diphosphocytidyl-2-C-methyl-D-erythritol kinase, found in Rhizobium leguminosarum bv. trifolii (strain WSM2304).